A 194-amino-acid chain; its full sequence is NAD(P)H:quinone oxidoreductase (194 aa).

The protein belongs to the SsuE family. In terms of assembly, homotetramer. It depends on FMN as a cofactor.

The enzyme catalyses a quinone + NADH + H(+) = a quinol + NAD(+). It carries out the reaction a quinone + NADPH + H(+) = a quinol + NADP(+). In terms of biological role, the enzyme apparently serves as a quinone reductase in connection with conjugation reactions of hydroquinones involved in detoxification pathways. The sequence is that of NAD(P)H:quinone oxidoreductase from Solanum tuberosum (Potato).